Consider the following 299-residue polypeptide: MEQHLDAYCMHLRSERQVSPHTLEAYRRDLSKVLAYCQKARLSSWNDLDIQHLRSFTARQHQQGQSSRSLARMLSAVRGFYKYLNREGLCQHDPANGLSPPKGERRLPKTLDTDRTAQLLDGGVEDDFLAHRDQAIMELLYSSGLRLSELTGLNLDQLDLRDGLVQVLGKGSKTRVLPVGSKARQALETWLPLRALTNPQDDAVFVSQQGKRLGPRAVQLRIKTAGERELGQNLHPHMLRHSFASHLLESSQDLRAVQELLGHADIKTTQIYTHLDFQHLATVYDSAHPRAKRKGAADD.

The Core-binding (CB) domain occupies 1–85; sequence MEQHLDAYCM…AVRGFYKYLN (85 aa). The 180-residue stretch at 106–285 folds into the Tyr recombinase domain; sequence RLPKTLDTDR…DFQHLATVYD (180 aa). Residues Arg-146, Lys-170, His-237, Arg-240, and His-263 contribute to the active site. Tyr-272 (O-(3'-phospho-DNA)-tyrosine intermediate) is an active-site residue.

The protein belongs to the 'phage' integrase family. XerC subfamily. As to quaternary structure, forms a cyclic heterotetrameric complex composed of two molecules of XerC and two molecules of XerD.

Its subcellular location is the cytoplasm. In terms of biological role, site-specific tyrosine recombinase, which acts by catalyzing the cutting and rejoining of the recombining DNA molecules. The XerC-XerD complex is essential to convert dimers of the bacterial chromosome into monomers to permit their segregation at cell division. It also contributes to the segregational stability of plasmids. In Pseudomonas syringae pv. tomato (strain ATCC BAA-871 / DC3000), this protein is Tyrosine recombinase XerC.